Reading from the N-terminus, the 860-residue chain is Glucans biosynthesis glucosyltransferase H (860 aa).

6 helical membrane-spanning segments follow: residues 146-166, 200-220, 519-539, 576-596, 610-630, and 686-706; these read ILLI…KGIL, ILLL…TALM, VFLT…FLVL, LFST…ILIW, TVSM…RMLF, and FLWW…VSVI.

It belongs to the glycosyltransferase 2 family. OpgH subfamily.

The protein resides in the cell inner membrane. It participates in glycan metabolism; osmoregulated periplasmic glucan (OPG) biosynthesis. Its function is as follows. Involved in the biosynthesis of osmoregulated periplasmic glucans (OPGs). This Pseudomonas syringae pv. syringae (strain B728a) protein is Glucans biosynthesis glucosyltransferase H.